The chain runs to 2481 residues: Serine/threonine-protein kinase TOR (2481 aa).

Residues 1–31 are disordered; that stretch reads MSTSSQSFVAGRPASMASPSQSHRFCGPSAT. 8 HEAT repeats span residues 205 to 242, 292 to 329, 373 to 410, 434 to 471, 569 to 607, 608 to 645, 737 to 775, and 781 to 819; these read VHVP…VIEK, SRYR…FLRD, HYLP…AMGS, DALD…SQAK, RLVE…FDDY, LAQA…KNPA, QYIP…STGY, and KEYP…LDPH. A disordered region spans residues 823-847; sequence RNQQSLSGSHGEVPRGTGDSGQPIP. 6 HEAT repeats span residues 866–904, 908–945, 952–992, 996–1036, 1037–1075, and 1077–1114; these read YYST…SMGL, PYLP…IVRQ, PELL…ALND, TYLP…GTLD, EHMH…CVQV, and GHIS…ALGE. Positions 1179–1204 are disordered; that stretch reads DPFEEGTDRNHQVNDGRLRTAGEASQ. Over residues 1184-1198 the composition is skewed to basic and acidic residues; that stretch reads GTDRNHQVNDGRLRT. The FAT domain maps to 1309 to 1887; the sequence is LLGALAEKCR…MYPLLVACKS (579 aa). 2 consecutive short sequence motifs (nuclear localization signal) follow at residues 1505–1512 and 2075–2080; these read VRRAKYDE and KQRPRK. A PI3K/PI4K catalytic domain is found at 2065-2378; it reads FSRQLVVITS…DEDPADIDLP (314 aa). The segment at 2071-2077 is G-loop; sequence VITSKQR. A catalytic loop region spans residues 2244-2252; it reads GLGDRHPSN. Residues 2264 to 2289 are activation loop; the sequence is HIDFGDCFEASMNREKFPEKVPFRLT. The interval 2354–2384 is disordered; sequence NNNPNAPADVEPDEEDEDPADIDLPQPQRST. Acidic residues predominate over residues 2363–2374; sequence VEPDEEDEDPAD. Serine 2424 carries the phosphoserine modification. The 33-residue stretch at 2449 to 2481 folds into the FATC domain; it reads HGLSVKVQVQKLINQATSHENLCQNYVGWCPFW.

This sequence belongs to the PI3/PI4-kinase family. As to quaternary structure, interacts with RAPTOR1 and itself. Interacts with FKBP12 in a rapamycin-dependent manner. Binds to LST8-1. Hyperactivated upon interaction with cauliflower mosaic virus (CaMV) Tav protein. Post-translationally, activated by phosphorylation on Ser-2424 triggered by cauliflower mosaic virus P6 and auxin. As to expression, highly expressed in root meristems, shoot apical meristem (SAM) and floral buds.

Its subcellular location is the cytoplasm. The protein resides in the nucleus. The enzyme catalyses L-seryl-[protein] + ATP = O-phospho-L-seryl-[protein] + ADP + H(+). It carries out the reaction L-threonyl-[protein] + ATP = O-phospho-L-threonyl-[protein] + ADP + H(+). Almost insensitive to rapamycin. Strongly repressed by specific active site inhibitors (asTORis) such as AZD-8055, TORIN2 and WYE-132, and, to a lesser extent, by KU63794, WYE-354 and TORIN1, leading to impaired photoautotrophic growth and abnormally early meristematic cells differentiation. Repression by TORIN1 leads to impaired responses to auxin, including gravitropism. Combined treatment with rapamycin and active-site inhibitors (e.g. Torin1 and AZD-8055) results in synergistic inhibition of activity and plant growth. Inhibition by KU63794 leads to reduced auxin content in root tips. AZD-8055 treatment reduces abscisic acid (ABA) levels. In addition, inhibition by AZD-8055 leads to a strong reduction of watermelon mosaic virus (WMV) infection. Essential cell growth regulator that controls development from early embryo to seed production. Controls plant growth in environmental stress conditions. Acts through the phosphorylation of downstream effectors that are recruited by the binding partner RAPTOR. Acts by activating transcription, protein synthesis and ribosome biogenesis, and inhibiting mRNA degradation and autophagy. Can phosphorylate TAP46, a regulatory subunit of protein phosphatase 2A that modulates cell growth and survival. Involved in modulating the transition from heterotrophic to photoautotrophic growth by regulating the expression of chloroplast- and photosynthesis-associated genes. Essential for auxin signaling transduction, probably acting in polysomes to maintain the active ATPK1/S6K1 (and thus TIF3H1/eIF3h) phosphorylation status that is critical for translation reinitiation (e.g. uORF-mRNAs loading). Promotes abscisic acid (ABA) biosynthesis. Involved in the regulation of sugar-mediated (e.g. glucose and sucrose) glycolysis- and mitochondrial bioenergetics-dependent root growth promotion. Required for sugar (e.g. glucose) promotion of hypocotyl elongation in the dark, by activating the brassinosteroid pathway and stabilizing BZR1. The regulation of BZR1 degradation is dependent on autophagy. Regulates the expression, phosphorylation and ribosome association of MRFs (e.g. MRF1, MRF3 and MRF4), especially under energy-deficient conditions. Its function is as follows. (Microbial infection) Binding to cauliflower mosaic virus (CaMV) Tav protein is critical for both translation reinitiation and viral fitness. When activated by CaMV P6, promotes CaMV translation by inhibiting cellular autophagy and suppressing both silencing and innate immunity, thus conferring sensitivity to P.syringae. Functionally, (Microbial infection) Required during infection by some potyvirus such as Watermelon mosaic virus (WMV) but not for turnip mosaic virus (TuMV). This is Serine/threonine-protein kinase TOR from Arabidopsis thaliana (Mouse-ear cress).